Consider the following 549-residue polypeptide: Oxygen-dependent choline dehydrogenase (549 aa).

An FAD-binding site is contributed by 4–33 (DFVIIGSGSAGSAMAYRLSEDGRYSVIVIE). The active-site Proton acceptor is H465.

The protein belongs to the GMC oxidoreductase family. It depends on FAD as a cofactor.

The enzyme catalyses choline + A = betaine aldehyde + AH2. It catalyses the reaction betaine aldehyde + NAD(+) + H2O = glycine betaine + NADH + 2 H(+). It functions in the pathway amine and polyamine biosynthesis; betaine biosynthesis via choline pathway; betaine aldehyde from choline (cytochrome c reductase route): step 1/1. Functionally, involved in the biosynthesis of the osmoprotectant glycine betaine. Catalyzes the oxidation of choline to betaine aldehyde and betaine aldehyde to glycine betaine at the same rate. The chain is Oxygen-dependent choline dehydrogenase from Brucella melitensis biotype 1 (strain ATCC 23456 / CCUG 17765 / NCTC 10094 / 16M).